A 130-amino-acid chain; its full sequence is Small ribosomal subunit protein uS8 (130 aa).

This sequence belongs to the universal ribosomal protein uS8 family. In terms of assembly, part of the 30S ribosomal subunit. Contacts proteins S5 and S12.

In terms of biological role, one of the primary rRNA binding proteins, it binds directly to 16S rRNA central domain where it helps coordinate assembly of the platform of the 30S subunit. The protein is Small ribosomal subunit protein uS8 of Vibrio campbellii (strain ATCC BAA-1116).